A 121-amino-acid chain; its full sequence is MSLTNEQIIEAIGQKTVLEVVELIKAMEETFGVTAAVAAAGPAAAAAVVEEQTEFNVMLTEAGEKKVNVIKAVRELTGLGLKEAKAVVDGAPAMVLEAVAKEAADKAKAALEEAGAKVELK.

This sequence belongs to the bacterial ribosomal protein bL12 family. In terms of assembly, homodimer. Part of the ribosomal stalk of the 50S ribosomal subunit. Forms a multimeric L10(L12)X complex, where L10 forms an elongated spine to which 2 to 4 L12 dimers bind in a sequential fashion. Binds GTP-bound translation factors.

Forms part of the ribosomal stalk which helps the ribosome interact with GTP-bound translation factors. Is thus essential for accurate translation. This Pseudomonas fluorescens (strain ATCC BAA-477 / NRRL B-23932 / Pf-5) protein is Large ribosomal subunit protein bL12.